Here is a 390-residue protein sequence, read N- to C-terminus: Protein dom34 (390 aa).

It belongs to the eukaryotic release factor 1 family. Pelota subfamily. Component of the Dom34-Hbs1 complex, also named Pelota-HBS1L complex, composed of dom34 and hbs1. A divalent metal cation is required as a cofactor.

The protein localises to the cytoplasm. Its function is as follows. Component of the Dom34-Hbs1 complex, a complex that recognizes stalled ribosomes and triggers the No-Go Decay (NGD) pathway. In the Dom34-Hbs1 complex, dom34 recognizes ribosomes stalled at the 3' end of an mRNA and engages stalled ribosomes by destabilizing mRNA in the mRNA channel. Following ribosome-binding, the Dom34-Hbs1 complex promotes the disassembly of stalled ribosomes, followed by degradation of damaged mRNAs as part of the NGD pathway. The sequence is that of Protein dom34 from Schizosaccharomyces pombe (strain 972 / ATCC 24843) (Fission yeast).